A 356-amino-acid chain; its full sequence is Tyrosine recombinase XerS (356 aa).

In terms of domain architecture, Core-binding (CB) spans 16–121; the sequence is IMPWYVLDYY…ALSSLYKYLT (106 aa). In terms of domain architecture, Tyr recombinase spans 169 to 354; sequence AFLDYVDKEY…VNDEQKNALD (186 aa). Catalysis depends on residues Arg210, Lys234, His306, Arg309, and His332. Tyr341 (O-(3'-phospho-DNA)-tyrosine intermediate) is an active-site residue.

It belongs to the 'phage' integrase family. XerS subfamily.

It localises to the cytoplasm. Its activity is regulated as follows. FtsK is required for recombination. Functionally, site-specific tyrosine recombinase, which acts by catalyzing the cutting and rejoining of the recombining DNA molecules. Essential to convert dimers of the bacterial chromosome into monomers to permit their segregation at cell division. The polypeptide is Tyrosine recombinase XerS (Streptococcus pyogenes serotype M1).